Consider the following 428-residue polypeptide: CRS2-associated factor 1, mitochondrial (428 aa).

The transit peptide at 1-21 (MLLLAGLLRRARPPRRPSVRR) directs the protein to the mitochondrion. Disordered stretches follow at residues 33–100 (PPAS…REPK) and 129–152 (HADD…RERV). CRM domains are found at residues 155-253 (EPLT…KRPV) and 275-371 (EGLT…IQDN). Residues 378 to 428 (SVLEEESAGAESENGDQEQASSDWASDECSQLSSSDEMPDDKSAISEADSD) are disordered. Residues 380–393 (LEEESAGAESENGD) are compositionally biased toward acidic residues. Residues 394 to 413 (QEQASSDWASDECSQLSSSD) are compositionally biased toward polar residues.

Part of large ribonucleo-protein complexes that include group IIB introns.

The protein resides in the mitochondrion. Functionally, may be involved in the splicing of group IIB introns in mitochondria. In Oryza sativa subsp. japonica (Rice), this protein is CRS2-associated factor 1, mitochondrial.